Here is a 362-residue protein sequence, read N- to C-terminus: Dihydroorotate dehydrogenase (quinone) (362 aa).

FMN is bound by residues 62-66 (AGYDK) and T86. Residue K66 coordinates substrate. Residue 111-115 (NRLGF) participates in substrate binding. FMN is bound by residues N139 and N170. N170 serves as a coordination point for substrate. S173 serves as the catalytic Nucleophile. Substrate is bound at residue N175. 2 residues coordinate FMN: K215 and S243. A substrate-binding site is contributed by 244 to 245 (NT). Residues G266, G295, and 316–317 (YS) each bind FMN.

The protein belongs to the dihydroorotate dehydrogenase family. Type 2 subfamily. In terms of assembly, monomer. FMN serves as cofactor.

It localises to the cell membrane. The catalysed reaction is (S)-dihydroorotate + a quinone = orotate + a quinol. The protein operates within pyrimidine metabolism; UMP biosynthesis via de novo pathway; orotate from (S)-dihydroorotate (quinone route): step 1/1. Catalyzes the conversion of dihydroorotate to orotate with quinone as electron acceptor. This Rhizobium rhizogenes (strain K84 / ATCC BAA-868) (Agrobacterium radiobacter) protein is Dihydroorotate dehydrogenase (quinone).